Reading from the N-terminus, the 246-residue chain is Probable transcriptional regulatory protein CGSHiEE_01480 (246 aa).

This sequence belongs to the TACO1 family.

The protein resides in the cytoplasm. The polypeptide is Probable transcriptional regulatory protein CGSHiEE_01480 (Haemophilus influenzae (strain PittEE)).